Consider the following 238-residue polypeptide: Triosephosphate isomerase (238 aa).

A substrate-binding site is contributed by 7–9 (NFK). H91 serves as the catalytic Electrophile. The Proton acceptor role is filled by E158. Residues G164 and S200 each contribute to the substrate site.

Belongs to the triosephosphate isomerase family. Homodimer.

The protein resides in the cytoplasm. The enzyme catalyses D-glyceraldehyde 3-phosphate = dihydroxyacetone phosphate. It participates in carbohydrate biosynthesis; gluconeogenesis. The protein operates within carbohydrate degradation; glycolysis; D-glyceraldehyde 3-phosphate from glycerone phosphate: step 1/1. Functionally, involved in the gluconeogenesis. Catalyzes stereospecifically the conversion of dihydroxyacetone phosphate (DHAP) to D-glyceraldehyde-3-phosphate (G3P). This is Triosephosphate isomerase from Ureaplasma parvum serovar 3 (strain ATCC 27815 / 27 / NCTC 11736).